The chain runs to 631 residues: Chaperone protein HtpG (631 aa).

The segment at methionine 1–arginine 339 is a; substrate-binding. Positions glutamate 340–lysine 555 are b. The c stretch occupies residues leucine 556–histidine 631.

The protein belongs to the heat shock protein 90 family. As to quaternary structure, homodimer.

It localises to the cytoplasm. Molecular chaperone. Has ATPase activity. The protein is Chaperone protein HtpG of Pasteurella multocida (strain Pm70).